The following is a 162-amino-acid chain: ATP synthase subunit b (162 aa).

A helical membrane pass occupies residues 16–36 (GISGGTIIYQLLMFIILLALL).

The protein belongs to the ATPase B chain family. F-type ATPases have 2 components, F(1) - the catalytic core - and F(0) - the membrane proton channel. F(1) has five subunits: alpha(3), beta(3), gamma(1), delta(1), epsilon(1). F(0) has three main subunits: a(1), b(2) and c(10-14). The alpha and beta chains form an alternating ring which encloses part of the gamma chain. F(1) is attached to F(0) by a central stalk formed by the gamma and epsilon chains, while a peripheral stalk is formed by the delta and b chains.

Its subcellular location is the cell membrane. Functionally, f(1)F(0) ATP synthase produces ATP from ADP in the presence of a proton or sodium gradient. F-type ATPases consist of two structural domains, F(1) containing the extramembraneous catalytic core and F(0) containing the membrane proton channel, linked together by a central stalk and a peripheral stalk. During catalysis, ATP synthesis in the catalytic domain of F(1) is coupled via a rotary mechanism of the central stalk subunits to proton translocation. Its function is as follows. Component of the F(0) channel, it forms part of the peripheral stalk, linking F(1) to F(0). This Bacillus caldotenax protein is ATP synthase subunit b.